Here is a 299-residue protein sequence, read N- to C-terminus: Small ribosomal subunit protein uS2 (299 aa).

The interval 227 to 299 (SERKSEKSTK…DKAKASNEEE (73 aa)) is disordered.

Belongs to the universal ribosomal protein uS2 family.

This chain is Small ribosomal subunit protein uS2, found in Christiangramia forsetii (strain DSM 17595 / CGMCC 1.15422 / KT0803) (Gramella forsetii).